Reading from the N-terminus, the 286-residue chain is Protein PXR1 (286 aa).

The segment at 1–20 (MGLAGTKVKQRFGLDPRNTS) is disordered. Positions 25-71 (KSRFGHRYLESMGWAPGKGLGLVEHATTTHVKVSVKDDTVGLGAKLA) constitute a G-patch domain. A disordered region spans residues 148 to 255 (EDESEVNFKS…PRKHDQISNV (108 aa)). Residues 168 to 198 (PSRDSTSHAKRMRGDESKKSTRDQSKQERKE) are compositionally biased toward basic and acidic residues. A compositionally biased stretch (basic residues) spans 199–230 (KKIKTEKKEKKEKKEKKEKKEKKEKKEKKEKK).

Belongs to the PINX1 family.

The protein localises to the nucleus. It localises to the nucleolus. Functionally, involved in rRNA-processing at A0, A1 and A2 sites and negatively regulates telomerase. This is Protein PXR1 (PXR1) from Meyerozyma guilliermondii (strain ATCC 6260 / CBS 566 / DSM 6381 / JCM 1539 / NBRC 10279 / NRRL Y-324) (Yeast).